The following is a 75-amino-acid chain: Small ribosomal subunit protein bS18 (75 aa).

This sequence belongs to the bacterial ribosomal protein bS18 family. Part of the 30S ribosomal subunit. Forms a tight heterodimer with protein bS6.

Binds as a heterodimer with protein bS6 to the central domain of the 16S rRNA, where it helps stabilize the platform of the 30S subunit. The polypeptide is Small ribosomal subunit protein bS18 (Mycoplasma mycoides subsp. mycoides SC (strain CCUG 32753 / NCTC 10114 / PG1)).